Here is a 269-residue protein sequence, read N- to C-terminus: Tryptophan synthase alpha chain (269 aa).

Residues glutamate 49 and aspartate 60 each act as proton acceptor in the active site.

The protein belongs to the TrpA family. Tetramer of two alpha and two beta chains.

It catalyses the reaction (1S,2R)-1-C-(indol-3-yl)glycerol 3-phosphate + L-serine = D-glyceraldehyde 3-phosphate + L-tryptophan + H2O. It functions in the pathway amino-acid biosynthesis; L-tryptophan biosynthesis; L-tryptophan from chorismate: step 5/5. Functionally, the alpha subunit is responsible for the aldol cleavage of indoleglycerol phosphate to indole and glyceraldehyde 3-phosphate. This chain is Tryptophan synthase alpha chain, found in Pseudomonas putida (strain GB-1).